Here is a 195-residue protein sequence, read N- to C-terminus: Calcium channel flower (195 aa).

Transmembrane regions (helical) follow at residues 34–54 (LLGI…VISI), 66–88 (IIQM…VCIE), and 117–137 (IFMC…ATGV).

It belongs to the calcium channel flower family. Homomultimer. Associates with the dally/ magu complex.

The protein localises to the cell membrane. The protein resides in the cytoplasmic vesicle. Its subcellular location is the secretory vesicle. It is found in the synaptic vesicle membrane. It localises to the presynaptic cell membrane. The protein localises to the endosome. Channel activity is inhibited by La(3+), which reduces Ca(2+) influx and thus inhibits it's function in promoting activity-dependent bulk endocytosis (ADBE) in response to high stimuli. Functionally, transmembrane protein which mediates synaptic endocytosis, fitness-based cell culling, neuronal culling, morphogen gradient scaling, and calcium transport. Regulates synaptic endocytosis and hence couples exo- with endocytosis. Controls two major modes of synaptic vesicle (SV) endocytosis in the synaptic boutons of neuromuscular junctions (NMJs); Ca(2+) channel-independent Clathrin-mediated endocytosis (CME) in response to mild stimulation, and Ca(2+) channel-dependent activity-dependent bulk endocytosis (ADBE) in response to strong stimulation. Functions in ADBE and subsequent SV reformation from bulk endosomes by initiating Ca(2+) channel-dependent phosphatidylinositol 4,5-bisphosphate (PtdIns(4,5)P2) compartmentalization in synaptic boutons. There it acts at the periactive zone to provide the low Ca(2+) levels required to initiate Calcineurin activation and upregulate PtdIns(4,5)P2. Conversely PtdIns(4,5)P2 enhances fwe Ca(2+) channel-activity, establishing a positive feedback loop that induces PtdIns(4,5)P2 microdomain at the periactive zone. These microdomains trigger bulk membrane invagination (i.e. ADBE) by triggering actin polymerization while also promoting localization of fwe to bulk endosomes, thereby removing the ADBE trigger to reduce endocytosis and prevent excess membrane uptake. PtdIns(4,5)P2 then promotes SV reformation from the bulk endosomes, to coordinate ADBE and subsequent SV reformation. Different combinations of the flower isoforms at the cell membrane are also required for the identification and elimination of suboptimal or supernumerary cells during development, regeneration, and adulthood. Required for the recognition and elimination of unfit cells in the developing wing during cell competition. In the developing pupal retina, mediates the elimination of unwanted postmitotic neurons, including supernumerary photoreceptor neurons that form at the periphery of the retina and are contained within incomplete ommatidia units. Also required for efficient elimination and replacement of old neurons by newly generated neurons during regeneration in the adult brain following mechanical injury. Downstream of the flower fitness fingerprints, cells identified as unwanted or unfit are eliminated via apoptosis through the expression of ahuizotl (azot). However, the cells marked for elimination by the flower isoforms only undergo apoptosis if additional thresholds are met; (1) their neighboring fit/healthy cells express different levels of the fwe isoforms, and (2) the levels of the protective signal SPARC expressed by the loser or unwanted cells are unable to inhibit caspase activation. These additional thresholds for flower-mediated apoptosis, allows useful cells to recover from transient and limited stress before they are unnecessarily eliminated. Functions with dally and magu in a mechanism of scaling, which utilises apoptosis to ensure that the dpp morphogen gradient, which mediates organ growth, remains proportional to the size of the growing wing. In this mechanism, fwe represses dally- and Magu-dependent activity in expanding the gradient, and dally/Magu inhibits fwe-dependent apoptosis to keep cell death rate low. When the levels of these different proteins are optimally regulated the gradient correctly scales with organ growth but when this fails, fwe-mediated apoptosis is activated to trim the developing tissue to match the correct size of the gradient. The polypeptide is Calcium channel flower (Drosophila ananassae (Fruit fly)).